The sequence spans 177 residues: RNA polymerase sigma-E factor (177 aa).

Positions 34 to 47 (DLLQTALARTYGRW) match the Polymerase core binding motif. Residues 128-147 (TEETAAALGMSAGTVKSTLH) constitute a DNA-binding region (H-T-H motif).

The protein belongs to the sigma-70 factor family. ECF subfamily.

The protein resides in the cytoplasm. Its function is as follows. Sigma factors are initiation factors that promote the attachment of RNA polymerase to specific initiation sites and are then released. This sigma factor is required for normal cell wall integrity; it is recruited by RNA polymerase to transcribe genes with cell wall-related functions. It is also involved in the transcription of the dagA gene coding for an extracellular agar-degrading enzyme. This Streptomyces coelicolor (strain ATCC BAA-471 / A3(2) / M145) protein is RNA polymerase sigma-E factor (sigE).